Consider the following 514-residue polypeptide: Deoxynucleoside triphosphate triphosphohydrolase SAMHD1 homolog (514 aa).

The interval 1–24 (MNNTFKYVNEDVSGTEGEESDYDP) is disordered. Position 80 (Lys80) interacts with GTP. Residue Asn83 coordinates a 2'-deoxyribonucleoside 5'-triphosphate. Residue 101–109 (DTEQFQRLR) coordinates GTP. Positions 113 and 128 each coordinate substrate. The region spanning 128–259 (RFEHSIGVSH…SVDVDKFDYL (132 aa)) is the HD domain. Residues His131, His170, and Asp171 each coordinate Zn(2+). His174 serves as a coordination point for substrate. His196 is a catalytic residue. Residues 252 to 258 (DVDKFDY), Tyr258, and Asp262 each bind substrate. Zn(2+) is bound at residue Asp254. A 2'-deoxyribonucleoside 5'-triphosphate is bound by residues Arg276, 291–293 (LSK), and Asn297. Substrate contacts are provided by residues Arg305 and 309 to 314 (HKLVYT). Positions 315 and 316 each coordinate a 2'-deoxyribonucleoside 5'-triphosphate. GTP-binding residues include Arg380 and Lys384.

This sequence belongs to the SAMHD1 family. In terms of assembly, homodimer; in absence of GTP and dNTP. Homotetramer; in GTP- and dNTP-bound form. Requires Zn(2+) as cofactor.

The enzyme catalyses a 2'-deoxyribonucleoside 5'-triphosphate + H2O = a 2'-deoxyribonucleoside + triphosphate + H(+). With respect to regulation, allosterically activated and regulated via the combined actions of GTP and dNTPs (dATP, dGTP, dTTP and dCTP): Allosteric site 1 binds GTP, while allosteric site 2 binds dNTP. Allosteric activation promotes the formation of highly active homotetramers. Functionally, has deoxynucleoside triphosphate (dNTPase) activity. This Dictyostelium discoideum (Social amoeba) protein is Deoxynucleoside triphosphate triphosphohydrolase SAMHD1 homolog.